Consider the following 833-residue polypeptide: Kinesin-like protein KIFC3 (833 aa).

The tract at residues Leu-19 to Arg-74 is disordered. Residues Pro-30–Pro-48 are compositionally biased toward low complexity. Coiled-coil stretches lie at residues Leu-102 to Ala-362 and Leu-395 to Arg-432. The Kinesin motor domain maps to Asn-445–Val-768. Residue Gly-528–Thr-535 coordinates ATP. Residues Glu-786–Val-833 are disordered. A compositionally biased stretch (polar residues) spans Ala-806 to Pro-815. A phosphoserine mark is found at Ser-813 and Ser-817.

This sequence belongs to the TRAFAC class myosin-kinesin ATPase superfamily. Kinesin family.

Its subcellular location is the cell junction. The protein localises to the adherens junction. It localises to the cytoplasm. It is found in the cytoskeleton. The protein resides in the microtubule organizing center. Its subcellular location is the centrosome. The protein localises to the cytoplasmic vesicle membrane. Functionally, minus-end microtubule-dependent motor protein. Involved in apically targeted transport. Required for zonula adherens maintenance. In Homo sapiens (Human), this protein is Kinesin-like protein KIFC3 (KIFC3).